The sequence spans 150 residues: Large ribosomal subunit protein bL9 (150 aa).

Belongs to the bacterial ribosomal protein bL9 family.

Its function is as follows. Binds to the 23S rRNA. The chain is Large ribosomal subunit protein bL9 from Burkholderia mallei (strain NCTC 10247).